A 306-amino-acid polypeptide reads, in one-letter code: TnpB-like protein aq_aa05 (306 aa).

Zn(2+) is bound by residues cysteine 213, cysteine 216, cysteine 234, and cysteine 237.

This sequence belongs to the transposase 35 family.

This is TnpB-like protein aq_aa05 from Aquifex aeolicus (strain VF5).